Here is a 347-residue protein sequence, read N- to C-terminus: Dihydroorotase (347 aa).

Zn(2+) contacts are provided by H14 and H16. Substrate contacts are provided by residues H16–R18 and N42. Residues K100, H137, and H175 each coordinate Zn(2+). An N6-carboxylysine modification is found at K100. H137 is a substrate binding site. Residue L220 participates in substrate binding. Position 248 (D248) interacts with Zn(2+). D248 is a catalytic residue. Residues H252 and A264 each contribute to the substrate site.

It belongs to the metallo-dependent hydrolases superfamily. DHOase family. Class II DHOase subfamily. In terms of assembly, homodimer. Zn(2+) serves as cofactor.

It carries out the reaction (S)-dihydroorotate + H2O = N-carbamoyl-L-aspartate + H(+). It participates in pyrimidine metabolism; UMP biosynthesis via de novo pathway; (S)-dihydroorotate from bicarbonate: step 3/3. In terms of biological role, catalyzes the reversible cyclization of carbamoyl aspartate to dihydroorotate. This is Dihydroorotase from Jannaschia sp. (strain CCS1).